Here is a 56-residue protein sequence, read N- to C-terminus: Large ribosomal subunit protein bL32 (56 aa).

A disordered region spans residues 1-38 (MAVQQNKKSRSKRGMRRSHDSLSTAQLSVDATSGELHR). A compositionally biased stretch (basic residues) spans 7–16 (KKSRSKRGMR). Over residues 21–31 (SLSTAQLSVDA) the composition is skewed to polar residues.

It belongs to the bacterial ribosomal protein bL32 family.

The chain is Large ribosomal subunit protein bL32 from Shewanella woodyi (strain ATCC 51908 / MS32).